We begin with the raw amino-acid sequence, 302 residues long: CASP-like protein 4A2 (302 aa).

Positions 1–13 (MALQAQQQATPSP) are enriched in polar residues. Residues 1-134 (MALQAQQQAT…APPPHAQVRS (134 aa)) are disordered. Residues 1-154 (MALQAQQQAT…RKRRAAVMQR (154 aa)) are Cytoplasmic-facing. The span at 40–60 (VVVASTHHAAAAARYVPPRAT) shows a compositional bias: low complexity. The span at 99–129 (KTPPPAPPLPAAPPPPPAASPAPAPRAPPPH) shows a compositional bias: pro residues. A helical transmembrane segment spans residues 155 to 175 (AALLARAAAAGLCLAALAVLA). Residues 176-197 (SDTRRGWARDSYSNYAQFRYSE) lie on the Extracellular side of the membrane. The chain crosses the membrane as a helical span at residues 198 to 218 (AVNVVGFLYSVFQFVALAELM). Residues 219–238 (RRNKHLIPHPKRDLFDFTMD) lie on the Cytoplasmic side of the membrane. Residues 239–256 (QVVAYLLISSSSSATARA) form a helical membrane-spanning segment. The Extracellular segment spans residues 257-273 (SDLIENWGSDSFPSMAN). Residues 274 to 294 (GSIAISFVAFVVFAICSLISA) form a helical membrane-spanning segment. Topologically, residues 295-302 (YNLFRRDM) are cytoplasmic.

Belongs to the Casparian strip membrane proteins (CASP) family. As to quaternary structure, homodimer and heterodimers.

The protein localises to the cell membrane. This Zea mays (Maize) protein is CASP-like protein 4A2.